The following is a 728-amino-acid chain: FYN-binding protein 2 (728 aa).

Disordered stretches follow at residues 17 to 76, 250 to 287, and 367 to 390; these read QNLD…PLQP, QAPE…RPPI, and PGKN…EKQP. Residues 42 to 75 are compositionally biased toward polar residues; sequence GTQSTQILANGKPLSSNHKQRTPYCSSSESQPLQ. Positions 276-285 are enriched in pro residues; the sequence is GPPPPKPSRP. The span at 377–390 shows a compositional bias: basic and acidic residues; it reads SAKHEDKKMKEKQP. Y491 carries the phosphotyrosine modification. The SH2-binding; to LCP2 signature appears at 521–524; that stretch reads YEDV. Y587 is modified (phosphotyrosine). The 61-residue stretch at 664-724 folds into the SH3 domain; that stretch reads IVINTAVACS…LIEHLDFKHQ (61 aa).

In terms of assembly, interacts with SKAP1, LCK and FYN. The phosphorylated form interacts with LCP2. Phosphorylation is required for its function in T-cell activation. In terms of tissue distribution, expressed in T-cells (at protein level). Widely expressed.

The protein localises to the membrane raft. Functionally, adapter protein that plays a role in T-cell receptor (TCR)-mediated activation of signaling pathways. Required for T-cell activation and integrin-mediated T-cell adhesion in response to TCR stimulation. The sequence is that of FYN-binding protein 2 from Homo sapiens (Human).